The chain runs to 681 residues: Probable L-type lectin-domain containing receptor kinase S.7 (681 aa).

The N-terminal stretch at 1-21 (MSLSRKLLVIFFTWITALSMS) is a signal peptide. Residues 22-305 (KPIFVSSDNM…PSKKRRHRHN (284 aa)) lie on the Extracellular side of the membrane. Positions 30–265 (NMNFTFKSFT…IHLIENWSFK (236 aa)) are legume-lectin like. N-linked (GlcNAc...) asparagine glycosylation is found at Asn-32, Asn-42, Asn-86, Asn-121, Asn-135, Asn-261, and Asn-281. A helical transmembrane segment spans residues 306-326 (LAIGLGISCPVLICLALFVFG). Topologically, residues 327–681 (YFTLKKWKSV…EGDSIVYVVS (355 aa)) are cytoplasmic. In terms of domain architecture, Protein kinase spans 365–643 (FHSSRVIGRG…RVLQILNNEI (279 aa)). ATP is bound by residues 371-379 (IGRGAFGNV) and Lys-394. Residue Asp-493 is the Proton acceptor of the active site.

This sequence in the C-terminal section; belongs to the protein kinase superfamily. Ser/Thr protein kinase family. In the N-terminal section; belongs to the leguminous lectin family.

Its subcellular location is the cell membrane. The enzyme catalyses L-seryl-[protein] + ATP = O-phospho-L-seryl-[protein] + ADP + H(+). The catalysed reaction is L-threonyl-[protein] + ATP = O-phospho-L-threonyl-[protein] + ADP + H(+). Its function is as follows. Involved in resistance response to the pathogenic oomycetes Phytophthora infestans and Phytophthora capsici. The sequence is that of Probable L-type lectin-domain containing receptor kinase S.7 from Arabidopsis thaliana (Mouse-ear cress).